Reading from the N-terminus, the 194-residue chain is Imidazoleglycerol-phosphate dehydratase (194 aa).

This sequence belongs to the imidazoleglycerol-phosphate dehydratase family.

The protein localises to the cytoplasm. The enzyme catalyses D-erythro-1-(imidazol-4-yl)glycerol 3-phosphate = 3-(imidazol-4-yl)-2-oxopropyl phosphate + H2O. Its pathway is amino-acid biosynthesis; L-histidine biosynthesis; L-histidine from 5-phospho-alpha-D-ribose 1-diphosphate: step 6/9. This Lactiplantibacillus plantarum (strain ATCC BAA-793 / NCIMB 8826 / WCFS1) (Lactobacillus plantarum) protein is Imidazoleglycerol-phosphate dehydratase.